Reading from the N-terminus, the 163-residue chain is Large ribosomal subunit protein uL18 (163 aa).

This sequence belongs to the universal ribosomal protein uL18 family. Part of the 50S ribosomal subunit. Contacts the 5S and 23S rRNAs.

Its function is as follows. This is one of the proteins that bind and probably mediate the attachment of the 5S RNA into the large ribosomal subunit, where it forms part of the central protuberance. The sequence is that of Large ribosomal subunit protein uL18 from Thermoplasma acidophilum (strain ATCC 25905 / DSM 1728 / JCM 9062 / NBRC 15155 / AMRC-C165).